The primary structure comprises 417 residues: Gamma-glutamyl phosphate reductase (417 aa).

Belongs to the gamma-glutamyl phosphate reductase family.

It is found in the cytoplasm. The enzyme catalyses L-glutamate 5-semialdehyde + phosphate + NADP(+) = L-glutamyl 5-phosphate + NADPH + H(+). Its pathway is amino-acid biosynthesis; L-proline biosynthesis; L-glutamate 5-semialdehyde from L-glutamate: step 2/2. In terms of biological role, catalyzes the NADPH-dependent reduction of L-glutamate 5-phosphate into L-glutamate 5-semialdehyde and phosphate. The product spontaneously undergoes cyclization to form 1-pyrroline-5-carboxylate. This Escherichia coli O7:K1 (strain IAI39 / ExPEC) protein is Gamma-glutamyl phosphate reductase.